Consider the following 331-residue polypeptide: F-box protein At2g26160 (331 aa).

Residues 4-52 (PEWSELPGDLINLTANRFSSISDVLRVRSICKPWRSAAATPKSFQCNLP) enclose the F-box domain.

The sequence is that of F-box protein At2g26160 from Arabidopsis thaliana (Mouse-ear cress).